The following is a 296-amino-acid chain: Light-independent protochlorophyllide reductase iron-sulfur ATP-binding protein (296 aa).

Basic and acidic residues predominate over residues 1-11 (MTSTITRKEDG). The tract at residues 1-20 (MTSTITRKEDGEGSVQVKQD) is disordered. ATP-binding positions include 39-44 (GIGKST) and Lys68. Ser43 serves as a coordination point for Mg(2+). Residues Cys124 and Cys158 each contribute to the [4Fe-4S] cluster site. Residue 209–210 (NR) participates in ATP binding.

It belongs to the NifH/BchL/ChlL family. As to quaternary structure, homodimer. Protochlorophyllide reductase is composed of three subunits; ChlL, ChlN and ChlB. [4Fe-4S] cluster is required as a cofactor.

It carries out the reaction chlorophyllide a + oxidized 2[4Fe-4S]-[ferredoxin] + 2 ADP + 2 phosphate = protochlorophyllide a + reduced 2[4Fe-4S]-[ferredoxin] + 2 ATP + 2 H2O. The protein operates within porphyrin-containing compound metabolism; chlorophyll biosynthesis (light-independent). Functionally, component of the dark-operative protochlorophyllide reductase (DPOR) that uses Mg-ATP and reduced ferredoxin to reduce ring D of protochlorophyllide (Pchlide) to form chlorophyllide a (Chlide). This reaction is light-independent. The L component serves as a unique electron donor to the NB-component of the complex, and binds Mg-ATP. This is Light-independent protochlorophyllide reductase iron-sulfur ATP-binding protein from Prochlorococcus marinus (strain NATL1A).